The following is a 330-amino-acid chain: Putative [LysW]-L-2-aminoadipate/[LysW]-L-glutamate phosphate reductase (330 aa).

10-13 (SGYI) contacts NADP(+). The active site involves C142. An NADP(+)-binding site is contributed by N297.

The protein belongs to the NAGSA dehydrogenase family. Type 1 subfamily. LysY sub-subfamily.

It is found in the cytoplasm. The catalysed reaction is [amino-group carrier protein]-C-terminal-N-(1-carboxy-5-oxopentan-1-yl)-L-glutamine + phosphate + NADP(+) = [amino-group carrier protein]-C-terminal-N-(1-carboxy-5-phosphooxy-5-oxopentan-1-yl)-L-glutamine + NADPH + H(+). It carries out the reaction [amino-group carrier protein]-C-terminal-gamma-(L-glutamyl-5-semialdehyde)-L-glutamate + phosphate + NADP(+) = [amino-group carrier protein]-C-terminal-gamma-(5-phospho-L-glutamyl)-L-glutamate + NADPH + H(+). The protein operates within amino-acid biosynthesis; L-lysine biosynthesis via AAA pathway; L-lysine from L-alpha-aminoadipate (Thermus route): step 3/5. It participates in amino-acid biosynthesis; L-arginine biosynthesis. Involved in both the arginine and lysine biosynthetic pathways. This is Putative [LysW]-L-2-aminoadipate/[LysW]-L-glutamate phosphate reductase from Pyrococcus horikoshii (strain ATCC 700860 / DSM 12428 / JCM 9974 / NBRC 100139 / OT-3).